A 211-amino-acid polypeptide reads, in one-letter code: Small ribosomal subunit protein uS3 (211 aa).

Residues 38-106 enclose the KH type-2 domain; it reads LRNFLKKRLY…EVYLNIQEVR (69 aa).

The protein belongs to the universal ribosomal protein uS3 family. Part of the 30S ribosomal subunit. Forms a tight complex with proteins S10 and S14.

In terms of biological role, binds the lower part of the 30S subunit head. Binds mRNA in the 70S ribosome, positioning it for translation. The protein is Small ribosomal subunit protein uS3 of Geobacter sp. (strain M21).